A 482-amino-acid chain; its full sequence is 6-phosphogluconate dehydrogenase, decarboxylating (482 aa).

NADP(+) contacts are provided by residues 17-22 (GLAVMG), 40-42 (NRS), 82-84 (VKA), and Asn110. Residues Asn110 and 136–138 (SGG) each bind substrate. Lys193 serves as the catalytic Proton acceptor. 196–197 (HN) serves as a coordination point for substrate. Glu200 (proton donor) is an active-site residue. The substrate site is built by Tyr201, Lys272, Arg299, Arg457, and His463.

The protein belongs to the 6-phosphogluconate dehydrogenase family. In terms of assembly, homodimer.

It carries out the reaction 6-phospho-D-gluconate + NADP(+) = D-ribulose 5-phosphate + CO2 + NADPH. The protein operates within carbohydrate degradation; pentose phosphate pathway; D-ribulose 5-phosphate from D-glucose 6-phosphate (oxidative stage): step 3/3. Catalyzes the oxidative decarboxylation of 6-phosphogluconate to ribulose 5-phosphate and CO(2), with concomitant reduction of NADP to NADPH. In Synechocystis sp. (strain ATCC 27184 / PCC 6803 / Kazusa), this protein is 6-phosphogluconate dehydrogenase, decarboxylating (gnd).